Reading from the N-terminus, the 539-residue chain is Probable transcription factor GLK2 (539 aa).

The segment at 86-218 (FASSPDDEPP…NSHGKRKVKV (133 aa)) is disordered. Composition is skewed to low complexity over residues 99–111 (SAPGPGEPAAAAG) and 121–130 (AAAAAAAAAA). Positions 144–161 (KKDDEERSSSLPEEKDAK) are enriched in basic and acidic residues. The region spanning 212-271 (GKRKVKVDWTPELHRRFVQAVEQLGIDKAVPSRILELMGIECLTRHNIASHLQKYRSHRK) is the HTH myb-type domain. A DNA-binding region (H-T-H motif) is located at residues 242–267 (PSRILELMGIECLTRHNIASHLQKYR).

As to expression, expressed in leaves.

The protein resides in the nucleus. Its function is as follows. Probable transcriptional activator that promotes chloroplast development. Acts as an activator of nuclear photosynthetic genes involved in chlorophyll biosynthesis, light harvesting, and electron transport. In Oryza sativa subsp. japonica (Rice), this protein is Probable transcription factor GLK2 (GLK2).